Reading from the N-terminus, the 358-residue chain is Small ribosomal subunit biogenesis GTPase RsgA (358 aa).

The CP-type G domain maps to 76 to 234; that stretch reads STEIDRPAVA…LADSPGFNQP (159 aa). GTP contacts are provided by residues 125–128 and 176–184; these read NKID and GPSGVGKSS. Zn(2+) contacts are provided by Cys259, Cys264, His266, and Cys272. The disordered stretch occupies residues 319-358; the sequence is TYEPKLANKKYRRPSRRGKNQDQERYENKTLQDIYNDDSE. The segment covering 325–336 has biased composition (basic residues); the sequence is ANKKYRRPSRRG. Residues 337–348 are compositionally biased toward basic and acidic residues; it reads KNQDQERYENKT.

This sequence belongs to the TRAFAC class YlqF/YawG GTPase family. RsgA subfamily. Monomer. Associates with 30S ribosomal subunit, binds 16S rRNA. The cofactor is Zn(2+).

It is found in the cytoplasm. One of several proteins that assist in the late maturation steps of the functional core of the 30S ribosomal subunit. Helps release RbfA from mature subunits. May play a role in the assembly of ribosomal proteins into the subunit. Circularly permuted GTPase that catalyzes slow GTP hydrolysis, GTPase activity is stimulated by the 30S ribosomal subunit. This Microcystis aeruginosa (strain NIES-843 / IAM M-2473) protein is Small ribosomal subunit biogenesis GTPase RsgA.